We begin with the raw amino-acid sequence, 283 residues long: Phosphatidylserine decarboxylase proenzyme (283 aa).

Residues Asp90, His143, and Ser248 each act as charge relay system; for autoendoproteolytic cleavage activity in the active site. Catalysis depends on Ser248, which acts as the Schiff-base intermediate with substrate; via pyruvic acid; for decarboxylase activity. Ser248 is subject to Pyruvic acid (Ser); by autocatalysis.

It belongs to the phosphatidylserine decarboxylase family. PSD-B subfamily. Prokaryotic type I sub-subfamily. As to quaternary structure, heterodimer of a large membrane-associated beta subunit and a small pyruvoyl-containing alpha subunit. Pyruvate serves as cofactor. In terms of processing, is synthesized initially as an inactive proenzyme. Formation of the active enzyme involves a self-maturation process in which the active site pyruvoyl group is generated from an internal serine residue via an autocatalytic post-translational modification. Two non-identical subunits are generated from the proenzyme in this reaction, and the pyruvate is formed at the N-terminus of the alpha chain, which is derived from the carboxyl end of the proenzyme. The autoendoproteolytic cleavage occurs by a canonical serine protease mechanism, in which the side chain hydroxyl group of the serine supplies its oxygen atom to form the C-terminus of the beta chain, while the remainder of the serine residue undergoes an oxidative deamination to produce ammonia and the pyruvoyl prosthetic group on the alpha chain. During this reaction, the Ser that is part of the protease active site of the proenzyme becomes the pyruvoyl prosthetic group, which constitutes an essential element of the active site of the mature decarboxylase.

It is found in the cell membrane. It catalyses the reaction a 1,2-diacyl-sn-glycero-3-phospho-L-serine + H(+) = a 1,2-diacyl-sn-glycero-3-phosphoethanolamine + CO2. It functions in the pathway phospholipid metabolism; phosphatidylethanolamine biosynthesis; phosphatidylethanolamine from CDP-diacylglycerol: step 2/2. In terms of biological role, catalyzes the formation of phosphatidylethanolamine (PtdEtn) from phosphatidylserine (PtdSer). This chain is Phosphatidylserine decarboxylase proenzyme, found in Francisella tularensis subsp. mediasiatica (strain FSC147).